A 355-amino-acid chain; its full sequence is MNTTPVHALTDIDGGIAVDPAPRLAGPPVFGGPGNAAFDLVPVRSTGRETLRFDFPGVSVGSAHYEEGPTGATVIHIPAGARTAVDARGGAVGLSGGYDFNHAICLAGGASYGLEAGAGVSGALLERLEYRTGFAEAQLVSSAVIYDFSARSTAVYPDKALGRAALEFAVPGEFPQGRAGAGMSASAGKVDWDRTEITGQGAAFRRLGDVRILAVVVPNPVGVIMDRAGGIVRGNYDAQTGVRRHPVFDYQEAFAEQLPPVTQAGNTTISAIVTNVRMSPVELNQFAKQVHSSMHRGIQPFHTDMDGDTLFAVTTDEIDLPTTPGSSRGRLSVNATALGAIASEVMWDAVLEAAK.

The Nucleophile role is filled by T267.

This sequence belongs to the peptidase S58 family. Heterotetramer composed of 4 alpha/beta heterodimers. In terms of processing, expressed as an inactive precursor that is cleaved autocatalytically at Asn266/Thr267 to generate an active enzyme composed of an alpha subunit and a beta subunit.

It carries out the reaction [N-(6-aminohexanoyl)]n + H2O = [N-(6-aminohexanoyl)]n-x + [N-(6-aminohexanoyl)]x.. Its pathway is xenobiotic degradation; nylon-6 oligomer degradation. In terms of biological role, involved in the degradation of nylon-6 oligomers. Degrades cyclic and linear oligomers of 6-aminohexanoate (Ahx) with a degree of polymerization greater than three by an endo-type mode. Cannot use Ahx cyclic dimer or the Ahx linear dimer. The sequence is that of 6-aminohexanoate-oligomer endohydrolase from Kocuria sp. (strain KY2).